The sequence spans 189 residues: Protein shisa-like-2A (189 aa).

Transmembrane regions (helical) follow at residues 48-68 and 70-90; these read SFFP…LVGL and TAAV…YLFI. The tract at residues 98-189 is disordered; the sequence is LDPGLSLQTT…PTPGPHGPVP (92 aa). Residues 140 to 171 show a composition bias toward polar residues; the sequence is NTHLESNKKQTVSPTCLPQNQFMATVTASNIP.

This sequence belongs to the shisa family.

The protein resides in the membrane. The sequence is that of Protein shisa-like-2A (Shisal2a) from Mus musculus (Mouse).